The following is a 485-amino-acid chain: Sperm-associated antigen 8 (485 aa).

Disordered regions lie at residues 1-42 (METN…SPRS), 75-98 (KTPAPCSEFMEPSSDPSLLGEPCA), and 127-215 (TTTD…CIPP). Low complexity predominate over residues 132-150 (SSNPGPVPGSSSGPVLGSS). Positions 151-191 (SGAGHGSGSGSGPGCGSVPGSGSGPGPGSGPGSGPGHGSGS) are enriched in gly residues. Mn stretches follow at residues 327 to 340 (SSTTQKDSYQPPGN) and 379 to 393 (ESVTHHDYRMELAQA).

This sequence belongs to the SPAG8 family. In terms of assembly, microtubule inner protein component of sperm flagellar doublet microtubules. Interacts with FHL5 (via second LIM domain). Interacts with RANBP9. Expressed in testis (germ cells), but not in liver, kidney, prostate and small intestine. Expressed in airway epithelial cells.

It is found in the cytoplasm. It localises to the nucleus. The protein localises to the cytoplasmic vesicle. Its subcellular location is the secretory vesicle. The protein resides in the acrosome. It is found in the cytoskeleton. It localises to the microtubule organizing center. The protein localises to the spindle. Its subcellular location is the cilium axoneme. The protein resides in the flagellum axoneme. Functionally, microtubule inner protein (MIP) part of the dynein-decorated doublet microtubules (DMTs) in cilia axoneme, which is required for motile cilia beating. Plays a role in spermatogenesis by enhancing the binding of CREM isoform tau to its coactivator FHL5 and increasing the FHL5-regulated transcriptional activation of CREM isoform tau. Involved in the acrosome reaction and in binding of sperm to the zona pellucida. Plays a role in regulation of the cell cycle by controlling progression through the G2/M phase, possibly by delaying the activation of CDK1 which is required for entry into mitosis. May play a role in fertility and microtubule formation through interaction with RANBP9. The chain is Sperm-associated antigen 8 from Homo sapiens (Human).